Reading from the N-terminus, the 77-residue chain is Translation initiation factor IF-1, chloroplastic (77 aa).

Residues 1–71 enclose the S1-like domain; that stretch reads MKEQKLIHEG…TRGRIIYRLR (71 aa).

This sequence belongs to the IF-1 family. Component of the 30S ribosomal translation pre-initiation complex which assembles on the 30S ribosome in the order IF-2 and IF-3, IF-1 and N-formylmethionyl-tRNA(fMet); mRNA recruitment can occur at any time during PIC assembly.

The protein localises to the plastid. It is found in the chloroplast. In terms of biological role, one of the essential components for the initiation of protein synthesis. Stabilizes the binding of IF-2 and IF-3 on the 30S subunit to which N-formylmethionyl-tRNA(fMet) subsequently binds. Helps modulate mRNA selection, yielding the 30S pre-initiation complex (PIC). Upon addition of the 50S ribosomal subunit IF-1, IF-2 and IF-3 are released leaving the mature 70S translation initiation complex. In Liriodendron tulipifera (Tuliptree), this protein is Translation initiation factor IF-1, chloroplastic.